The sequence spans 238 residues: uncharacterized protein (238 aa).

Positions 1 to 20 (MPNLHSLPLGTRPENAIRNN) are disordered.

The protein belongs to the PEP2 family.

This is an uncharacterized protein from Emericella nidulans (strain FGSC A4 / ATCC 38163 / CBS 112.46 / NRRL 194 / M139) (Aspergillus nidulans).